The sequence spans 411 residues: MDLAGLLLDEEGTFSLTGFQDFTFLPGHQKLSARIRRRLYYGWDWETDCTLEELSSPVADIAVELLQKAAPSPIRRLQKKYVAHVSREACISPCAMMLALVYIERLRHRNPDYLQHVSSSDLFLISMMVASKYLYDEGEEEEVFNDEWGAAGGVAVPTLNALERGFLSAMDWRLYTDPREIFEVLSWLEGCVAEQQGRRRGWYTYTDLCVLLEQPAWQLVLGSLCQQLAKLSCLLAMAYVSSVALAVASMAVIHQSLGLSCSPPPGPPDLGLASRCLLEPCIPSPMPQCLPSPANASGCLEGNVVLRSLWGSLLVSLTPPPLPPPDPPAPPILLHNCPLCQKLQKDSPTCRACHHLNHTVPTGPPSPWSHSHGLAPPWPWSPMPPLLPQPQQCSLFSIMELARLKSFIFPG.

The helical transmembrane segment at 231 to 253 threads the bilayer; sequence LSCLLAMAYVSSVALAVASMAVI.

It belongs to the CNPPD1 family.

Its subcellular location is the membrane. This Bos taurus (Bovine) protein is Protein CNPPD1 (CNPPD1).